The following is a 290-amino-acid chain: Nucleotide-binding protein BPP4038 (290 aa).

9–16 (GISGSGKS) provides a ligand contact to ATP. 58 to 61 (DVRS) is a GTP binding site.

The protein belongs to the RapZ-like family.

In terms of biological role, displays ATPase and GTPase activities. The sequence is that of Nucleotide-binding protein BPP4038 from Bordetella parapertussis (strain 12822 / ATCC BAA-587 / NCTC 13253).